A 561-amino-acid chain; its full sequence is Acylcarnitine hydrolase (561 aa).

A signal peptide spans 1–26 (MTRNQLHNWLNAGFFGLLLLLIHVQG). Cysteines 97 and 125 form a disulfide. Ser230 (acyl-ester intermediate) is an active-site residue. A disulfide bond links Cys282 and Cys293. Catalysis depends on charge relay system residues Glu347 and His459. The Prevents secretion from ER signature appears at 558 to 561 (HREL).

It belongs to the type-B carboxylesterase/lipase family. In terms of tissue distribution, detected in liver (at protein level).

Its subcellular location is the microsome. It is found in the endoplasmic reticulum. The enzyme catalyses an O-acyl-(R)-carnitine + H2O = (R)-carnitine + a fatty acid + H(+). It catalyses the reaction all-trans-retinyl hexadecanoate + H2O = all-trans-retinol + hexadecanoate + H(+). In terms of biological role, hydrolase with high activity towards palmitoylcarnitine. Is also active with p-nitrophenylacetate and alpha-naphthylacetate. May also hydrolyze retinyl esters. This Mus musculus (Mouse) protein is Acylcarnitine hydrolase.